Reading from the N-terminus, the 178-residue chain is Small ribosomal subunit protein uS4 (178 aa).

Residues 104–166 (RRLQTMVYKK…PNSPMASENH (63 aa)) form the S4 RNA-binding domain. The tract at residues 157–178 (PNSPMASENHPERTAAVSEENQ) is disordered.

It belongs to the universal ribosomal protein uS4 family. In terms of assembly, part of the 30S ribosomal subunit. Contacts protein S5. The interaction surface between S4 and S5 is involved in control of translational fidelity.

In terms of biological role, one of the primary rRNA binding proteins, it binds directly to 16S rRNA where it nucleates assembly of the body of the 30S subunit. Functionally, with S5 and S12 plays an important role in translational accuracy. This chain is Small ribosomal subunit protein uS4, found in Methanococcus maripaludis (strain C7 / ATCC BAA-1331).